Consider the following 257-residue polypeptide: Ribonuclease HII (257 aa).

In terms of domain architecture, RNase H type-2 spans 72–257 (TYIAGIDEVG…FAPIKDMIKK (186 aa)). Residues Asp-78, Glu-79, and Asp-170 each coordinate a divalent metal cation.

This sequence belongs to the RNase HII family. Mn(2+) is required as a cofactor. Mg(2+) serves as cofactor.

Its subcellular location is the cytoplasm. It catalyses the reaction Endonucleolytic cleavage to 5'-phosphomonoester.. Its function is as follows. Endonuclease that specifically degrades the RNA of RNA-DNA hybrids. The sequence is that of Ribonuclease HII from Bacillus anthracis (strain A0248).